The chain runs to 147 residues: Leghemoglobin (147 aa).

In terms of domain architecture, Globin spans 2 to 147; the sequence is GFTADQEALV…LASAIKKAMS (146 aa). Residues tyrosine 25 and tyrosine 30 each carry the nitrated tyrosine modification. Position 45 (serine 45) interacts with heme b. Serine 45 carries the phosphoserine modification. Histidine 62 is an O2 binding site. Heme b-binding residues include lysine 65, histidine 94, and lysine 97. Tyrosine 135 is modified (nitrated tyrosine).

It belongs to the plant globin family. In terms of assembly, monomer. In terms of processing, nitrated in effective nodules and particularly in hypoxic conditions; this mechanism may play a protective role in the symbiosis by buffering toxic peroxynitrite NO(2)(-). Nitration level decrease during nodule senescence. Post-translationally, phosphorylation at Ser-45 disrupts the molecular environment of its porphyrin ring oxygen binding pocket, thus leading to a reduced oxygen consumption and to the delivery of oxygen O(2) to symbiosomes. Root nodules.

Its subcellular location is the cytoplasm. The protein localises to the cytosol. It localises to the nucleus. In terms of biological role, leghemoglobin that reversibly binds oxygen O(2) through a pentacoordinated heme iron. In root nodules, facilitates the diffusion of oxygen to the bacteroids while preventing the bacterial nitrogenase from being inactivated by buffering dioxygen, nitric oxide and carbon monoxide, and promoting the formation of reactive oxygen species (ROS, e.g. H(2)O(2)). This role is essential for symbiotic nitrogen fixation (SNF). In Medicago sativa (Alfalfa), this protein is Leghemoglobin (LB3).